We begin with the raw amino-acid sequence, 114 residues long: Large ribosomal subunit protein bL17 (114 aa).

Belongs to the bacterial ribosomal protein bL17 family. In terms of assembly, part of the 50S ribosomal subunit. Contacts protein L32.

This chain is Large ribosomal subunit protein bL17, found in Halothermothrix orenii (strain H 168 / OCM 544 / DSM 9562).